The sequence spans 476 residues: Serine/threonine-protein kinase Chk1 (476 aa).

The segment at 1 to 265 is interaction with CLSPN; it reads MAVPFVEDWD…IPDIKKDRWY (265 aa). Residues 9–265 form the Protein kinase domain; the sequence is WDLVQTLGEG…IPDIKKDRWY (257 aa). ATP contacts are provided by residues 15–23 and Lys-38; that span reads LGEGAYGEV. The active-site Proton acceptor is the Asp-130. Residue Lys-132 forms a Glycyl lysine isopeptide (Lys-Gly) (interchain with G-Cter in ubiquitin) linkage. The tract at residues 270–327 is disordered; that stretch reads KKGAKRPRVTSGGVSESPSGFSKHIQSNLDFSPVNSASSEENVKYSSSQPEPRTGLSL. A phosphoserine mark is found at Ser-280, Ser-286, Ser-296, and Ser-301. The span at 281–320 shows a compositional bias: polar residues; the sequence is GGVSESPSGFSKHIQSNLDFSPVNSASSEENVKYSSSQPE. Ser-317 is modified (phosphoserine; by ATM and ATR). Position 331 is a phosphoserine (Ser-331). At Ser-345 the chain carries Phosphoserine; by ATM and ATR. Residues 391–476 are autoinhibitory region; the sequence is QCLKETCEKL…SSQKIWLPAT (86 aa). Residue Lys-436 forms a Glycyl lysine isopeptide (Lys-Gly) (interchain with G-Cter in ubiquitin) linkage. A phosphoserine mark is found at Ser-467 and Ser-468.

The protein belongs to the protein kinase superfamily. CAMK Ser/Thr protein kinase family. NIM1 subfamily. As to quaternary structure, interacts (phosphorylated by ATR) with RAD51. Interacts with and phosphorylates CLSPN, an adapter protein that regulates the ATR-dependent phosphorylation of CHEK1. Interacts with BRCA1. Interacts with and phosphorylates CDC25A, CDC25B and CDC25C. Interacts with FBXO6, which regulates CHEK1. Interacts with PPM1D, which regulates CHEK1 through dephosphorylation. Interacts with TIMELESS; DNA damage-dependent. Interacts with FEM1B; activates CHEK1 in response to stress. Interacts with TLK1. Interacts with XPO1 and YWHAZ. Interacts with CDK5RAP3; antagonizes CHEK1. In terms of assembly, isoform 1 associates with isoform 2, the interaction is disrupted upon phosphorylation by ATR. Phosphorylated by ATR in a RAD17-dependent manner in response to ultraviolet irradiation and inhibition of DNA replication. Phosphorylated by ATM in response to ionizing irradiation. ATM and ATR can both phosphorylate Ser-317 and Ser-345 and this results in enhanced kinase activity. Phosphorylation at Ser-345 induces a change in the conformation of the protein, activates the kinase activity and is a prerequisite for interaction with FBXO6 and subsequent ubiquitination at Lys-436. Phosphorylation at Ser-345 also increases binding to 14-3-3 proteins and promotes nuclear retention. Conversely, dephosphorylation at Ser-345 by PPM1D may contribute to exit from checkpoint mediated cell cycle arrest. Phosphorylation at Ser-280 by AKT1/PKB, may promote mono and/or diubiquitination. Also phosphorylated at undefined residues during mitotic arrest, resulting in decreased activity. Post-translationally, ubiquitinated. Mono or diubiquitination promotes nuclear exclusion. The activated form (phosphorylated on Ser-345) is polyubiquitinated at Lys-436 by some SCF-type E3 ubiquitin ligase complex containing FBXO6 promoting its degradation. Ubiquitination and degradation are required to terminate the checkpoint and ensure that activated CHEK1 does not accumulate as cells progress through S phase, when replication forks encounter transient impediments during normal DNA replication. 'Lys-63'-mediated ubiquitination by TRAF4 at Lys-132 activates cell cycle arrest and activation of DNA repair. In terms of processing, proteolytically cleaved at the C-terminus by SPRTN during normal DNA replication, thereby promoting CHEK1 removal from chromatin and activating the protein kinase activity. In terms of tissue distribution, expressed ubiquitously with the most abundant expression in thymus, testis, small intestine and colon.

The protein resides in the nucleus. The protein localises to the chromosome. It localises to the cytoplasm. Its subcellular location is the cytoskeleton. It is found in the microtubule organizing center. The protein resides in the centrosome. It carries out the reaction L-seryl-[protein] + ATP = O-phospho-L-seryl-[protein] + ADP + H(+). It catalyses the reaction L-threonyl-[protein] + ATP = O-phospho-L-threonyl-[protein] + ADP + H(+). Its activity is regulated as follows. Activated through phosphorylation predominantly by ATR but also by ATM in response to DNA damage or inhibition of DNA replication. Activation is modulated by several mediators including CLSPN, BRCA1 and FEM1B. Proteolytic cleavage at the C-terminus by SPRTN during normal DNA replication activates the protein kinase activity. Its function is as follows. Serine/threonine-protein kinase which is required for checkpoint-mediated cell cycle arrest and activation of DNA repair in response to the presence of DNA damage or unreplicated DNA. May also negatively regulate cell cycle progression during unperturbed cell cycles. This regulation is achieved by a number of mechanisms that together help to preserve the integrity of the genome. Recognizes the substrate consensus sequence [R-X-X-S/T]. Binds to and phosphorylates CDC25A, CDC25B and CDC25C. Phosphorylation of CDC25A at 'Ser-178' and 'Thr-507' and phosphorylation of CDC25C at 'Ser-216' creates binding sites for 14-3-3 proteins which inhibit CDC25A and CDC25C. Phosphorylation of CDC25A at 'Ser-76', 'Ser-124', 'Ser-178', 'Ser-279' and 'Ser-293' promotes proteolysis of CDC25A. Phosphorylation of CDC25A at 'Ser-76' primes the protein for subsequent phosphorylation at 'Ser-79', 'Ser-82' and 'Ser-88' by NEK11, which is required for polyubiquitination and degradation of CDCD25A. Inhibition of CDC25 leads to increased inhibitory tyrosine phosphorylation of CDK-cyclin complexes and blocks cell cycle progression. Also phosphorylates NEK6. Binds to and phosphorylates RAD51 at 'Thr-309', which promotes the release of RAD51 from BRCA2 and enhances the association of RAD51 with chromatin, thereby promoting DNA repair by homologous recombination. Phosphorylates multiple sites within the C-terminus of TP53, which promotes activation of TP53 by acetylation and promotes cell cycle arrest and suppression of cellular proliferation. Also promotes repair of DNA cross-links through phosphorylation of FANCE. Binds to and phosphorylates TLK1 at 'Ser-743', which prevents the TLK1-dependent phosphorylation of the chromatin assembly factor ASF1A. This may enhance chromatin assembly both in the presence or absence of DNA damage. May also play a role in replication fork maintenance through regulation of PCNA. May regulate the transcription of genes that regulate cell-cycle progression through the phosphorylation of histones. Phosphorylates histone H3.1 (to form H3T11ph), which leads to epigenetic inhibition of a subset of genes. May also phosphorylate RB1 to promote its interaction with the E2F family of transcription factors and subsequent cell cycle arrest. Phosphorylates SPRTN, promoting SPRTN recruitment to chromatin. Reduces replication stress and activates the G2/M checkpoint, by phosphorylating and inactivating PABIR1/FAM122A and promoting the serine/threonine-protein phosphatase 2A-mediated dephosphorylation and stabilization of WEE1 levels and activity. In terms of biological role, endogenous repressor of isoform 1, interacts with, and antagonizes CHK1 to promote the S to G2/M phase transition. The sequence is that of Serine/threonine-protein kinase Chk1 (CHEK1) from Homo sapiens (Human).